A 308-amino-acid chain; its full sequence is Type II restriction enzyme MamI (308 aa).

The enzyme catalyses Endonucleolytic cleavage of DNA to give specific double-stranded fragments with terminal 5'-phosphates.. In terms of biological role, a P subtype restriction enzyme that recognizes the double-stranded sequence 5'-GATNNNNATC-3' and cleaves after N-5. In Microbacterium ammoniaphilum, this protein is Type II restriction enzyme MamI.